The sequence spans 576 residues: Proline--tRNA ligase (576 aa).

This sequence belongs to the class-II aminoacyl-tRNA synthetase family. ProS type 1 subfamily. In terms of assembly, homodimer.

It localises to the cytoplasm. The catalysed reaction is tRNA(Pro) + L-proline + ATP = L-prolyl-tRNA(Pro) + AMP + diphosphate. In terms of biological role, catalyzes the attachment of proline to tRNA(Pro) in a two-step reaction: proline is first activated by ATP to form Pro-AMP and then transferred to the acceptor end of tRNA(Pro). As ProRS can inadvertently accommodate and process non-cognate amino acids such as alanine and cysteine, to avoid such errors it has two additional distinct editing activities against alanine. One activity is designated as 'pretransfer' editing and involves the tRNA(Pro)-independent hydrolysis of activated Ala-AMP. The other activity is designated 'posttransfer' editing and involves deacylation of mischarged Ala-tRNA(Pro). The misacylated Cys-tRNA(Pro) is not edited by ProRS. The chain is Proline--tRNA ligase from Leptospira interrogans serogroup Icterohaemorrhagiae serovar copenhageni (strain Fiocruz L1-130).